A 104-amino-acid polypeptide reads, in one-letter code: Large ribosomal subunit protein bL21 (104 aa).

The protein belongs to the bacterial ribosomal protein bL21 family. In terms of assembly, part of the 50S ribosomal subunit. Contacts protein L20.

Functionally, this protein binds to 23S rRNA in the presence of protein L20. The protein is Large ribosomal subunit protein bL21 of Granulibacter bethesdensis (strain ATCC BAA-1260 / CGDNIH1).